The sequence spans 245 residues: NAD-dependent protein deacetylase (245 aa).

A Deacetylase sirtuin-type domain is found at 1–245; the sequence is MLLLDKINEL…SIGKVLETVI (245 aa). Residues A26, T30, F37, R38, Q107, I109, D110, and H125 each contribute to the NAD(+) site. Residue F37 coordinates nicotinamide. Nicotinamide contacts are provided by I109 and D110. The active-site Proton acceptor is H125. Positions 133, 136, 155, and 158 each coordinate Zn(2+). Residues T196, S197, N219, and I237 each coordinate NAD(+).

The protein belongs to the sirtuin family. Class U subfamily. Zn(2+) serves as cofactor.

The protein resides in the cytoplasm. The enzyme catalyses N(6)-acetyl-L-lysyl-[protein] + NAD(+) + H2O = 2''-O-acetyl-ADP-D-ribose + nicotinamide + L-lysyl-[protein]. Its function is as follows. NAD-dependent protein deacetylase which modulates the activities of several enzymes which are inactive in their acetylated form. The sequence is that of NAD-dependent protein deacetylase from Clostridium acetobutylicum (strain ATCC 824 / DSM 792 / JCM 1419 / IAM 19013 / LMG 5710 / NBRC 13948 / NRRL B-527 / VKM B-1787 / 2291 / W).